The sequence spans 454 residues: Aquaporin-7 (454 aa).

The Cytoplasmic portion of the chain corresponds to 1-71; the sequence is MNINEPRDGG…LHLHNKTRNH (71 aa). A helical transmembrane segment spans residues 72-92; the sequence is FVATVAEFAGTTLFLFFAFSG. Residues 93 to 115 are Extracellular-facing; sequence TQVALLATPANDSNVVGTPSNPA. Asn103 carries N-linked (GlcNAc...) asparagine glycosylation. A helical transmembrane segment spans residues 116–136; it reads QLLYVSLCFGFSLAVNAWVFF. At 137–163 the chain is on the cytoplasmic side; it reads RISGGLFNPAVTMGMCIVGALPYFRGL. The NPA 1 signature appears at 144–146; it reads NPA. Residues 164–184 traverse the membrane as a helical segment; the sequence is LLIFAQIIGGIAAAAIVSALF. Topologically, residues 185–202 are extracellular; it reads PGPITFRTSLGGGTSIVQ. The helical transmembrane segment at 203 to 223 threads the bilayer; the sequence is GLFIEMFLTAELVFTIFMLAA. Over 224–229 the chain is Cytoplasmic; it reads EKHKGT. A helical membrane pass occupies residues 230–250; it reads FIAPIGIGLSLFIAELTGVYF. The Extracellular portion of the chain corresponds to 251-274; that stretch reads TGGSVNPARSFGPSVVSGQFTGYH. Residues 256-258 carry the NPA 2 motif; that stretch reads NPA. A helical transmembrane segment spans residues 275-295; that stretch reads WIYWVGPILGAILASAFYKFI. The Cytoplasmic portion of the chain corresponds to 296-454; sequence KMLEYETANP…ENLRDNTHNN (159 aa). Residues 343–454 form a disordered region; that stretch reads GASHVHENGN…ENLRDNTHNN (112 aa).

It belongs to the MIP/aquaporin (TC 1.A.8) family.

It localises to the membrane. It catalyses the reaction H2O(in) = H2O(out). Water channel required to facilitate the transport of water across membranes. Involved in conidiation. This Botryotinia fuckeliana (strain B05.10) (Noble rot fungus) protein is Aquaporin-7.